The chain runs to 117 residues: Large ribosomal subunit protein bL19 (117 aa).

Belongs to the bacterial ribosomal protein bL19 family.

This protein is located at the 30S-50S ribosomal subunit interface and may play a role in the structure and function of the aminoacyl-tRNA binding site. The sequence is that of Large ribosomal subunit protein bL19 from Vibrio cholerae serotype O1 (strain ATCC 39541 / Classical Ogawa 395 / O395).